The sequence spans 124 residues: Large ribosomal subunit protein bL21 (124 aa).

The disordered stretch occupies residues 105–124; sequence TVKAEPKSKRAPAPEAAADA. Over residues 115–124 the composition is skewed to low complexity; sequence APAPEAAADA.

This sequence belongs to the bacterial ribosomal protein bL21 family. As to quaternary structure, part of the 50S ribosomal subunit. Contacts protein L20.

This protein binds to 23S rRNA in the presence of protein L20. The sequence is that of Large ribosomal subunit protein bL21 from Xanthobacter autotrophicus (strain ATCC BAA-1158 / Py2).